A 196-amino-acid polypeptide reads, in one-letter code: uncharacterized protein (196 aa).

This is an uncharacterized protein from Mycoplasma pneumoniae (strain ATCC 29342 / M129 / Subtype 1) (Mycoplasmoides pneumoniae).